The chain runs to 198 residues: Protein UNCMA_24250 (198 aa).

One can recognise an AMMECR1 domain in the interval 5-194 (EDGTLAVKTA…ETEPGGPVIE (190 aa)).

This is Protein UNCMA_24250 from Methanocella arvoryzae (strain DSM 22066 / NBRC 105507 / MRE50).